The following is a 113-amino-acid chain: Pro-FMRFamide-related neuropeptide FF (113 aa).

An N-terminal signal peptide occupies residues 1–20 (MDSRQAAALLVLLLLIDGGC). The propeptide occupies 21–65 (AEGPGGQQEDQLSAEEDSEPLPPQDAQTSGSLLHYLLQAMERPGR). Residues 22 to 48 (EGPGGQQEDQLSAEEDSEPLPPQDAQT) form a disordered region. Residue Phe-76 is modified to Phenylalanine amide. Residues 79 to 92 (NTQGSWRNEWLSPR) constitute a propeptide that is removed on maturation. A Phenylalanine amide modification is found at Phe-110.

The protein belongs to the FARP (FMRFamide related peptide) family.

Its subcellular location is the secreted. In terms of biological role, morphine modulating peptides. Have wide-ranging physiologic effects, including the modulation of morphine-induced analgesia, elevation of arterial blood pressure, and increased somatostatin secretion from the pancreas. Neuropeptide FF potentiates and sensitizes ASIC1 and ASIC3 channels. The sequence is that of Pro-FMRFamide-related neuropeptide FF from Homo sapiens (Human).